Reading from the N-terminus, the 225-residue chain is NAD(P)H-quinone oxidoreductase subunit K, chloroplastic (225 aa).

Cys43, Cys44, Cys108, and Cys139 together coordinate [4Fe-4S] cluster.

Belongs to the complex I 20 kDa subunit family. In terms of assembly, NDH is composed of at least 16 different subunits, 5 of which are encoded in the nucleus. It depends on [4Fe-4S] cluster as a cofactor.

The protein resides in the plastid. It is found in the chloroplast thylakoid membrane. The enzyme catalyses a plastoquinone + NADH + (n+1) H(+)(in) = a plastoquinol + NAD(+) + n H(+)(out). The catalysed reaction is a plastoquinone + NADPH + (n+1) H(+)(in) = a plastoquinol + NADP(+) + n H(+)(out). In terms of biological role, NDH shuttles electrons from NAD(P)H:plastoquinone, via FMN and iron-sulfur (Fe-S) centers, to quinones in the photosynthetic chain and possibly in a chloroplast respiratory chain. The immediate electron acceptor for the enzyme in this species is believed to be plastoquinone. Couples the redox reaction to proton translocation, and thus conserves the redox energy in a proton gradient. In Barbarea verna (Land cress), this protein is NAD(P)H-quinone oxidoreductase subunit K, chloroplastic.